Reading from the N-terminus, the 407-residue chain is tRNA pseudouridine synthase 4 (407 aa).

The segment at 83–105 (FRPAPPHPNDRNRRRRKSNRLPD) is disordered. Asp115 (nucleophile) is an active-site residue. The segment at 274–298 (TEQDINPQDGDEKINAKSPTTNSVT) is disordered. Ser291 is subject to Phosphoserine. Thr293 carries the phosphothreonine modification. Phosphoserine is present on Ser296. A Phosphothreonine modification is found at Thr406.

The protein belongs to the pseudouridine synthase TruB family.

The protein localises to the nucleus. It is found in the mitochondrion. It catalyses the reaction uridine(55) in tRNA = pseudouridine(55) in tRNA. The enzyme catalyses a uridine in mRNA = a pseudouridine in mRNA. Functionally, responsible for synthesis of pseudouridine from uracil-55 in the psi GC loop of transfer RNAs. Also catalyzes pseudouridylation of mRNAs with the consensus sequence 5'-GGUUCRA-3'. This is tRNA pseudouridine synthase 4 from Schizosaccharomyces pombe (strain 972 / ATCC 24843) (Fission yeast).